Here is a 616-residue protein sequence, read N- to C-terminus: D-glucuronyl C5-epimerase (616 aa).

Topologically, residues 1-12 (MKCLRWRSNRHR) are cytoplasmic. Residues 13–29 (IYLLVACGALFLLNRHL) form a helical; Signal-anchor for type II membrane protein membrane-spanning segment. Topologically, residues 30-616 (TQEESRIDEE…YAYGKRAKHN (587 aa)) are extracellular. Substrate is bound by residues Tyr136, 141 to 143 (RDR), and Gln169. N-linked (GlcNAc...) asparagine glycans are attached at residues Asn188, Asn232, Asn267, and Asn471. Substrate contacts are provided by residues Tyr504, Arg562, and 574–580 (RWDYHAV).

This sequence belongs to the D-glucuronyl C5-epimerase family. In terms of assembly, homodimer. Expression in comma stage embryos is strong in the hypodermis and intestine and weaker in the head region. In late embryos, larval, and adult stages, expressed primarily in hypodermis and intestine.

Its subcellular location is the cell membrane. It is found in the secreted. The protein localises to the extracellular space. The protein resides in the extracellular matrix. It localises to the basement membrane. The enzyme catalyses [heparosan-N-sulfate](n) = [heparan-N-sulfate](n). Its pathway is glycan metabolism; heparan sulfate biosynthesis. It functions in the pathway glycan metabolism; heparin biosynthesis. Converts D-glucuronic acid residues adjacent to N-sulfate sugar residues to L-iduronic acids. Plays a role in the early migration of AQR and PQR neurons, which descend from the Q neuroblasts. In Caenorhabditis elegans, this protein is D-glucuronyl C5-epimerase (hse-5).